A 551-amino-acid chain; its full sequence is Chaperonin GroEL (551 aa).

ATP is bound by residues 29 to 32 (TMGP), lysine 50, 86 to 90 (DGTTT), glycine 414, 478 to 480 (NAA), and aspartate 494.

Belongs to the chaperonin (HSP60) family. In terms of assembly, forms a cylinder of 14 subunits composed of two heptameric rings stacked back-to-back. Interacts with the co-chaperonin GroES.

The protein resides in the cytoplasm. The catalysed reaction is ATP + H2O + a folded polypeptide = ADP + phosphate + an unfolded polypeptide.. In terms of biological role, together with its co-chaperonin GroES, plays an essential role in assisting protein folding. The GroEL-GroES system forms a nano-cage that allows encapsulation of the non-native substrate proteins and provides a physical environment optimized to promote and accelerate protein folding. The polypeptide is Chaperonin GroEL (Legionella jeonii).